We begin with the raw amino-acid sequence, 154 residues long: Photosystem II extrinsic protein U, chloroplastic (154 aa).

The transit peptide at 1 to 36 (MAFISTPLGKVTVKSATVSANRRGLRMQSDSEPVVS) directs the protein to the chloroplast. The transit peptide at 37–61 (RRALLSGALAAAVAAALARARPAQA) directs the protein to the thylakoid.

Belongs to the PsbU family. As to quaternary structure, PSII is composed of 1 copy each of membrane proteins PsbA, PsbB, PsbC, PsbD, PsbE, PsbF, PsbH, PsbI, PsbJ, PsbK, PsbL, PsbM, PsbT, PsbY, PsbZ, Psb30/Ycf12, at least 3 peripheral proteins of the oxygen-evolving complex and a large number of cofactors. It forms dimeric complexes. The extrinsic subunits in red algae are PsbO (OEC33), PsbQ', cytochrome c-550 and PsbU. Post-translationally, predicted to be translocated into the thylakoid lumen by the Tat system. The position of the first transit peptide cleavage has not been experimentally proven.

It is found in the plastid. The protein localises to the chloroplast thylakoid membrane. Functionally, one of the extrinsic, lumenal subunits of photosystem II (PSII). PSII is a light-driven water plastoquinone oxidoreductase, using light energy to abstract electrons from H(2)O, generating a proton gradient subsequently used for ATP formation. The extrinsic proteins stabilize the structure of photosystem II oxygen-evolving complex (OEC), the ion environment of oxygen evolution and protect the OEC against heat-induced inactivation. The polypeptide is Photosystem II extrinsic protein U, chloroplastic (Cyanidium caldarium (Red alga)).